A 344-amino-acid chain; its full sequence is Ferrochelatase (344 aa).

Fe cation is bound by residues H214 and E295.

Belongs to the ferrochelatase family.

It localises to the cytoplasm. It carries out the reaction heme b + 2 H(+) = protoporphyrin IX + Fe(2+). It functions in the pathway porphyrin-containing compound metabolism; protoheme biosynthesis; protoheme from protoporphyrin-IX: step 1/1. Catalyzes the ferrous insertion into protoporphyrin IX. This is Ferrochelatase from Rhizobium johnstonii (strain DSM 114642 / LMG 32736 / 3841) (Rhizobium leguminosarum bv. viciae).